Here is a 92-residue protein sequence, read N- to C-terminus: Small ribosomal subunit protein uS19 (92 aa).

The protein belongs to the universal ribosomal protein uS19 family.

Its function is as follows. Protein S19 forms a complex with S13 that binds strongly to the 16S ribosomal RNA. The chain is Small ribosomal subunit protein uS19 (rpsS) from Halalkalibacterium halodurans (strain ATCC BAA-125 / DSM 18197 / FERM 7344 / JCM 9153 / C-125) (Bacillus halodurans).